The primary structure comprises 140 residues: Large ribosomal subunit protein uL11 (140 aa).

This sequence belongs to the universal ribosomal protein uL11 family. Part of the ribosomal stalk of the 50S ribosomal subunit. Interacts with L10 and the large rRNA to form the base of the stalk. L10 forms an elongated spine to which L12 dimers bind in a sequential fashion forming a multimeric L10(L12)X complex. In terms of processing, one or more lysine residues are methylated.

Functionally, forms part of the ribosomal stalk which helps the ribosome interact with GTP-bound translation factors. This is Large ribosomal subunit protein uL11 from Dehalococcoides mccartyi (strain ATCC BAA-2266 / KCTC 15142 / 195) (Dehalococcoides ethenogenes (strain 195)).